A 93-amino-acid chain; its full sequence is Large ribosomal subunit protein bL31B (93 aa).

Belongs to the bacterial ribosomal protein bL31 family. Type B subfamily. As to quaternary structure, part of the 50S ribosomal subunit.

This Psychrobacter arcticus (strain DSM 17307 / VKM B-2377 / 273-4) protein is Large ribosomal subunit protein bL31B.